A 228-amino-acid polypeptide reads, in one-letter code: Ran-binding protein 1 homolog a (228 aa).

Residues 1-13 are compositionally biased toward basic and acidic residues; it reads MATNEPEHEHRDE. Disordered stretches follow at residues 1 to 30 and 159 to 228; these read MATN…QVAP and SEEE…GPST. The segment covering 14 to 24 has biased composition (acidic residues); that stretch reads EEAGANEDEDT. The RanBD1 domain maps to 27 to 162; that stretch reads QVAPIVRLEE…FKEVAESEEE (136 aa). A compositionally biased stretch (basic and acidic residues) spans 179–228; the sequence is LTVEETKTEEKTEAKAVETAKTEVKAEEKKESEAEKSGEAKKTEESGPST.

In terms of assembly, interacts with the GTP-bound form of RAN1, RAN2 and RAN3. Ubiquitous. Preferentially expressed in root tips and gynoecium.

The protein localises to the nucleus. The protein resides in the nuclear pore complex. In Arabidopsis thaliana (Mouse-ear cress), this protein is Ran-binding protein 1 homolog a (RANBP1A).